We begin with the raw amino-acid sequence, 234 residues long: Transcription factor ILR3 (234 aa).

Residues 34–85 (QPIGVSSNSSAGVDGSAGNSEASKEPGSKKRGRCESSSATSSKACREKQRRD) are disordered. A compositionally biased stretch (polar residues) spans 36-54 (IGVSSNSSAGVDGSAGNSE). The bHLH domain occupies 71–122 (SATSSKACREKQRRDRLNDKFMELGAILEPGNPPKTDKAAILVDAVRMVTQL).

In terms of assembly, homodimer. Interacts with BTS and BHLH47/PYE. As to expression, widely expressed throughout development, mostly in vasculatures.

It localises to the nucleus. Transcription factor. Plays a role in resistance to amide-linked indole-3-acetic acid (IAA) conjugates such as IAA-Leu and IAA-Phe. May regulate gene expression in response to metal homeostasis changes. The polypeptide is Transcription factor ILR3 (ILR3) (Arabidopsis thaliana (Mouse-ear cress)).